The sequence spans 397 residues: Elongation factor Tu (397 aa).

Positions 10-206 (KPHVNIGTIG…AVDASIPEPE (197 aa)) constitute a tr-type G domain. The interval 19–26 (GHIDHGKT) is G1. 19-26 (GHIDHGKT) lines the GTP pocket. T26 is a binding site for Mg(2+). The interval 62–66 (GITIS) is G2. The interval 83–86 (DCPG) is G3. GTP is bound by residues 83–87 (DCPGH) and 138–141 (NKAD). The segment at 138-141 (NKAD) is G4. A G5 region spans residues 176-178 (SAL).

The protein belongs to the TRAFAC class translation factor GTPase superfamily. Classic translation factor GTPase family. EF-Tu/EF-1A subfamily. Monomer.

The protein localises to the cytoplasm. It catalyses the reaction GTP + H2O = GDP + phosphate + H(+). Its function is as follows. GTP hydrolase that promotes the GTP-dependent binding of aminoacyl-tRNA to the A-site of ribosomes during protein biosynthesis. This is Elongation factor Tu from Parafrankia sp. (strain EAN1pec).